A 305-amino-acid polypeptide reads, in one-letter code: MQHPREENSIVVELEPALATFIKQGFNNLVKWPLLNIGVVLYNTSTAVNEEWLTAVEHIPTMKIFYKHIHKILTREMGFLVYLKRSQSEHDNYITLYDFDYYIIDKDTNSVTMVDKPTELKETLLHVFQEYRLKSSQTIELIAFSSGTVINEDIVSKLTFLDVEVFNREYNNVKTIIDPDFVSRSPFIVISPMGKLTFFVEVYSWFDFKSCFKDIIDFLEGTLIANIHNHMIKVGDCDETVSSYNPESGMLFVNDLMTMNIVNFFGCNSRLESYHRFDMTKVDVELFIKALSDACKKILSASNRL.

The protein belongs to the poxviridae DNA-directed RNA polymerase 35 kDa subunit family. The DNA-dependent RNA polymerase used for intermediate and late genes expression consists of eight subunits 147 kDa, 133 kDa, 35 kDa, 30 kDa, 22 kDa, 19 kDa, 18 kDa and 7 kDa totalling more than 500 kDa in mass. The same holoenzyme, with the addition of the transcription-specificity factor RAP94, is used for early gene expression.

The protein localises to the virion. The enzyme catalyses RNA(n) + a ribonucleoside 5'-triphosphate = RNA(n+1) + diphosphate. Functionally, part of the DNA-dependent RNA polymerase which catalyzes the transcription of viral DNA into RNA using the four ribonucleoside triphosphates as substrates. Responsible for the transcription of early, intermediate and late genes. DNA-dependent RNA polymerase associates with the early transcription factor (ETF), itself composed of D6 and A7, thereby allowing the early genes transcription. Late transcription, and probably also intermediate transcription, require newly synthesized RNA polymerase. This chain is DNA-directed RNA polymerase 35 kDa subunit (OPG156), found in Cynomys gunnisoni (Gunnison's prairie dog).